Consider the following 281-residue polypeptide: Alcohol dehydrogenase-related 31 kDa protein (281 aa).

11–34 (YVADCGGIALETSKVLMTKNIAKL) lines the NAD(+) pocket. Serine 139 contacts substrate. The active-site Proton acceptor is tyrosine 152.

This sequence belongs to the short-chain dehydrogenases/reductases (SDR) family.

This chain is Alcohol dehydrogenase-related 31 kDa protein (Adhr), found in Drosophila ambigua (Fruit fly).